We begin with the raw amino-acid sequence, 124 residues long: Small ribosomal subunit protein bS6 (124 aa).

The tract at residues 97–124 is disordered; it reads EQGPSAMMRRGDRDRSNRSDRRRDRDAA. A compositionally biased stretch (basic and acidic residues) spans 105 to 124; it reads RRGDRDRSNRSDRRRDRDAA.

The protein belongs to the bacterial ribosomal protein bS6 family.

Binds together with bS18 to 16S ribosomal RNA. The polypeptide is Small ribosomal subunit protein bS6 (Zymomonas mobilis subsp. mobilis (strain ATCC 31821 / ZM4 / CP4)).